Consider the following 123-residue polypeptide: Prostate stem cell antigen (123 aa).

Positions 1–20 (MKTVFFLLLATYLALHPGAA) are cleaved as a signal peptide. A UPAR/Ly6 domain is found at 21–95 (LQCYSCTAQM…CCYSDLCNVN (75 aa)). 5 disulfides stabilise this stretch: Cys-23-Cys-48, Cys-26-Cys-35, Cys-41-Cys-66, Cys-70-Cys-86, and Cys-87-Cys-92. N-linked (GlcNAc...) asparagine glycosylation is present at Asn-40. Residue Asn-95 is the site of GPI-anchor amidated asparagine attachment. The propeptide at 96-123 (GAHTLKPPTTLGLLTVLCSLLLWGSSRL) is removed in mature form.

Interacts with CHRNA4. As to expression, predominantly expressed in prostate. Also found in spleen, liver, lung, prostate, kidney and testis. Expressed in brain cortex; expression is increased in transgenic mouse model of Alzheimer disease (at protein level).

It localises to the cell membrane. Functionally, may be involved in the regulation of cell proliferation. May act as a modulator of nicotinic acetylcholine receptors (nAChRs) activity. In vitro inhibits nicotine-induced signaling probably implicating alpha-3:beta-2- or alpha-7-containing nAChRs. The protein is Prostate stem cell antigen (Psca) of Mus musculus (Mouse).